The following is a 229-amino-acid chain: Large ribosomal subunit protein uL1c (229 aa).

The protein belongs to the universal ribosomal protein uL1 family. Part of the 50S ribosomal subunit.

It localises to the plastid. The protein resides in the chloroplast. Its function is as follows. Binds directly to 23S rRNA. Might be involved in E site tRNA release (Potential). In Porphyra purpurea (Red seaweed), this protein is Large ribosomal subunit protein uL1c (rpl1).